A 423-amino-acid polypeptide reads, in one-letter code: O-methyltransferase aoiF (423 aa).

D273 lines the S-adenosyl-L-methionine pocket. Catalysis depends on H324, which acts as the Proton acceptor.

It belongs to the class I-like SAM-binding methyltransferase superfamily. Cation-independent O-methyltransferase family.

It functions in the pathway secondary metabolite biosynthesis. O-methyltransferase; part of the gene cluster that mediates the biosynthesis of a methylated derivative of known natural products orthosporin and diaporthin. Within the pathway, aoiF catalyzes the biotransformation of orthosporin to diaporthin but also of diaporthin to the final product, by performing a tandem methylation of the polyketide core. Orthosporin is produced by an oxidoreductase that has still to be identified and that catalyzes the stereospecific reduction of the carbonyl moiety of the hexaketide isocoumarin scaffold produced by the non-reducing polyketide synthase aoiG to generate the S-configured secondary alcohol at C-11. This Aspergillus oryzae (strain ATCC 42149 / RIB 40) (Yellow koji mold) protein is O-methyltransferase aoiF.